Here is a 127-residue protein sequence, read N- to C-terminus: CDGSH iron-sulfur domain-containing protein 3, mitochondrial (127 aa).

The N-terminal 14 residues, 1 to 14 (MRGAGAILRPAARG), are a transit peptide targeting the mitochondrion. K55 bears the N6-acetyllysine; alternate mark. At K55 the chain carries N6-succinyllysine; alternate. [2Fe-2S] cluster contacts are provided by C60, C62, C71, and H75. An N6-acetyllysine modification is found at K86. C98, C100, C109, and H113 together coordinate [2Fe-2S] cluster.

It belongs to the CISD protein family. As to quaternary structure, monomer. [2Fe-2S] cluster is required as a cofactor.

The protein resides in the mitochondrion. Can transfer its iron-sulfur clusters to the apoferrodoxins FDX1 and FDX2. Contributes to mitochondrial iron homeostasis and in maintaining normal levels of free iron and reactive oxygen species, and thereby contributes to normal mitochondrial function. The polypeptide is CDGSH iron-sulfur domain-containing protein 3, mitochondrial (CISD3) (Homo sapiens (Human)).